The following is a 349-amino-acid chain: Threonine-rich protein (349 aa).

The N-terminal stretch at 1–19 (MKGLTLACIAATVVAASHA) is a signal peptide. A glycan (N-linked (GlcNAc...) asparagine) is linked at N257. Positions 300–326 (QPDVSPMSVRKRRQAESAEEDDDLVGD) are disordered. Residues 316–326 (SAEEDDDLVGD) show a composition bias toward acidic residues. Residues 316 to 349 (SAEEDDDLVGDMEDLKELEQEIQEALEEVEKLDV) are a coiled coil.

As to expression, component of the acid-insoluble and acid-soluble organic matrix of calcified layers of the shell (at protein level).

Its subcellular location is the secreted. This chain is Threonine-rich protein, found in Lottia gigantea (Giant owl limpet).